Here is a 122-residue protein sequence, read N- to C-terminus: Large ribosomal subunit protein uL18 (122 aa).

This sequence belongs to the universal ribosomal protein uL18 family. As to quaternary structure, part of the 50S ribosomal subunit; part of the 5S rRNA/L5/L18/L25 subcomplex. Contacts the 5S and 23S rRNAs.

In terms of biological role, this is one of the proteins that bind and probably mediate the attachment of the 5S RNA into the large ribosomal subunit, where it forms part of the central protuberance. This chain is Large ribosomal subunit protein uL18, found in Hydrogenobaculum sp. (strain Y04AAS1).